A 106-amino-acid chain; its full sequence is PAT complex subunit Asterix (106 aa).

The disordered stretch occupies residues Met-1–Leu-29. Ser-2 carries the N-acetylserine modification. At Ser-2 to Pro-32 the chain is on the cytoplasmic side. A helical membrane pass occupies residues Thr-33–Leu-51. A topological domain (lumenal) is located at residue Lys-52. The chain crosses the membrane as a helical span at residues Leu-53–Asn-70. Over Ser-71–Ser-74 the chain is Cytoplasmic. The helical transmembrane segment at Glu-75–Tyr-95 threads the bilayer. The Lumenal segment spans residues Leu-96–Trp-106.

The protein belongs to the Asterix family. Component of the PAT complex, composed of WDR83OS/Asterix and CCDC47. The PAT complex is part of the multi-pass translocon (MPT) complex, composed of three subcomplexes, the GEL complex (composed of RAB5IF/OPTI and TMCO1), the BOS complex (composed of NCLN/Nicalin, NOMO1 and TMEM147) and the PAT complex (composed of WDR83OS/Asterix and CCDC47). The MPT complex associates with the SEC61 complex.

It localises to the endoplasmic reticulum membrane. In terms of biological role, component of the multi-pass translocon (MPT) complex that mediates insertion of multi-pass membrane proteins into the lipid bilayer of membranes. The MPT complex takes over after the SEC61 complex: following membrane insertion of the first few transmembrane segments of proteins by the SEC61 complex, the MPT complex occludes the lateral gate of the SEC61 complex to promote insertion of subsequent transmembrane regions. Within the MPT complex, the PAT subcomplex sequesters any highly polar regions in the transmembrane domains away from the non-polar membrane environment until they can be buried in the interior of the fully assembled protein. Within the PAT subcomplex, WDR83OS/Asterix binds to and redirects the substrate to a location behind the SEC61 complex. The sequence is that of PAT complex subunit Asterix (WDR83OS) from Bos taurus (Bovine).